We begin with the raw amino-acid sequence, 399 residues long: Ribose-phosphate pyrophosphokinase 2, chloroplastic (399 aa).

The N-terminal 32 residues, 1-32 (MAAKAAALSSSPFVSSRRLSSPAASLRARTPR), are a transit peptide targeting the chloroplast. Residues D214, H216, D225, and D229 each contribute to the Mg(2+) site. Residues 299 to 314 (GKVAIMVDDMIDTAGT) form a binding of phosphoribosylpyrophosphate region.

The protein belongs to the ribose-phosphate pyrophosphokinase family. Requires Mg(2+) as cofactor.

It is found in the plastid. The protein localises to the chloroplast. The enzyme catalyses D-ribose 5-phosphate + ATP = 5-phospho-alpha-D-ribose 1-diphosphate + AMP + H(+). The chain is Ribose-phosphate pyrophosphokinase 2, chloroplastic from Oryza sativa subsp. japonica (Rice).